We begin with the raw amino-acid sequence, 118 residues long: V-type proton ATPase subunit G 3 (118 aa).

The span at 1 to 12 shows a compositional bias: polar residues; that stretch reads MASQSQGIQQLL. Residues 1-37 are disordered; sequence MASQSQGIQQLLQAEKRAKDKLEEAKKRKNKRLRQAK. A coiled-coil region spans residues 3 to 53; sequence SQSQGIQQLLQAEKRAKDKLEEAKKRKNKRLRQAKEEATADIDQYRLKREG. Over residues 14–26 the composition is skewed to basic and acidic residues; it reads AEKRAKDKLEEAK.

The protein belongs to the V-ATPase G subunit family. V-ATPase is a heteromultimeric enzyme made up of two complexes: the ATP-hydrolytic V1 complex and the proton translocation V0 complex. The V1 complex consists of three catalytic AB heterodimers that form a heterohexamer, three peripheral stalks each consisting of EG heterodimers, one central rotor including subunits D and F, and the regulatory subunits C and H. The proton translocation complex V0 consists of the proton transport subunit a, a ring of proteolipid subunits c9c'', rotary subunit d, subunits e and f, and two accessory subunits.

In terms of biological role, subunit of the V1 complex of vacuolar(H+)-ATPase (V-ATPase), a multisubunit enzyme composed of a peripheral complex (V1) that hydrolyzes ATP and a membrane integral complex (V0) that translocates protons. V-ATPase is responsible for acidifying and maintaining the pH of intracellular compartments and in some cell types, is targeted to the plasma membrane, where it is responsible for acidifying the extracellular environment. The sequence is that of V-type proton ATPase subunit G 3 (atp6v1g3) from Xenopus tropicalis (Western clawed frog).